We begin with the raw amino-acid sequence, 399 residues long: Digeranylgeranylglycerophospholipid reductase (399 aa).

Residues G15, E34, C45, A46, G48, R99, A123, D280, G292, and I293 each contribute to the FAD site.

The protein belongs to the geranylgeranyl reductase family. DGGGPL reductase subfamily. FAD is required as a cofactor.

The enzyme catalyses a 2,3-bis-O-phytanyl-sn-glycerol 1-phospholipid + 8 oxidized 2[4Fe-4S]-[ferredoxin] = a 2,3-bis-O-(geranylgeranyl)-sn-glycerol 1-phospholipid + 8 reduced 2[4Fe-4S]-[ferredoxin] + 16 H(+). It carries out the reaction 2,3-bis-O-(phytanyl)-sn-glycerol 1-phosphate + 8 oxidized 2[4Fe-4S]-[ferredoxin] = 2,3-bis-O-(geranylgeranyl)-sn-glycerol 1-phosphate + 8 reduced 2[4Fe-4S]-[ferredoxin] + 16 H(+). It catalyses the reaction a 2,3-bis-O-phytanyl-sn-glycerol 1-phospholipid + 8 A = a 2,3-bis-O-(geranylgeranyl)-sn-glycerol 1-phospholipid + 8 AH2. The catalysed reaction is CDP-2,3-bis-O-(geranylgeranyl)-sn-glycerol + 8 AH2 = CDP-2,3-bis-O-(phytanyl)-sn-glycerol + 8 A. The enzyme catalyses archaetidylserine + 8 AH2 = 2,3-bis-O-phytanyl-sn-glycero-3-phospho-L-serine + 8 A. It participates in membrane lipid metabolism; glycerophospholipid metabolism. Functionally, is involved in the reduction of 2,3-digeranylgeranylglycerophospholipids (unsaturated archaeols) into 2,3-diphytanylglycerophospholipids (saturated archaeols) in the biosynthesis of archaeal membrane lipids. Catalyzes the formation of archaetidic acid (2,3-di-O-phytanyl-sn-glyceryl phosphate) from 2,3-di-O-geranylgeranylglyceryl phosphate (DGGGP) via the hydrogenation of each double bond of the isoprenoid chains. Is also probably able to reduce double bonds of geranyl groups in CDP-2,3-bis-O-(geranylgeranyl)-sn-glycerol and archaetidylserine, thus acting at various stages in the biosynthesis of archaeal membrane lipids. The chain is Digeranylgeranylglycerophospholipid reductase from Methanosphaerula palustris (strain ATCC BAA-1556 / DSM 19958 / E1-9c).